The chain runs to 208 residues: Flavin-dependent thymidylate synthase (208 aa).

The region spanning 1 to 208 is the ThyX domain; the sequence is MEVICKHYTP…QYLFEDCLKH (208 aa). FAD-binding positions include S50 and 74–76; that span reads RHR. DUMP is bound by residues 71–74, 84–86, and K147; these read ELSR and SSR. Positions 74-84 match the ThyX motif motif; sequence RHRIASLSVKS. Residues 163–165 and N169 each bind FAD; that span reads NAR. Position 174 (R174) interacts with dUMP. The active-site Involved in ionization of N3 of dUMP, leading to its activation is R174.

It belongs to the thymidylate synthase ThyX family. In terms of assembly, homotetramer. It depends on FAD as a cofactor.

The enzyme catalyses dUMP + (6R)-5,10-methylene-5,6,7,8-tetrahydrofolate + NADPH + H(+) = dTMP + (6S)-5,6,7,8-tetrahydrofolate + NADP(+). The protein operates within pyrimidine metabolism; dTTP biosynthesis. Functionally, catalyzes the reductive methylation of 2'-deoxyuridine-5'-monophosphate (dUMP) to 2'-deoxythymidine-5'-monophosphate (dTMP) while utilizing 5,10-methylenetetrahydrofolate (mTHF) as the methyl donor, and NADPH and FADH(2) as the reductant. The protein is Flavin-dependent thymidylate synthase of Helicobacter pylori (strain J99 / ATCC 700824) (Campylobacter pylori J99).